The sequence spans 95 residues: MAFKPLHDRVLVRRVQSDEKTKGGLIIPDSAKEKPAEGEITSVGEGARKDSGELIAPAVKAGDRVLFGKWSGTEVTVDGEELLIMKESDILGIIA.

The tract at residues 20 to 45 (KTKGGLIIPDSAKEKPAEGEITSVGE) is disordered.

It belongs to the GroES chaperonin family. Heptamer of 7 subunits arranged in a ring. Interacts with the chaperonin GroEL.

It is found in the cytoplasm. Its function is as follows. Together with the chaperonin GroEL, plays an essential role in assisting protein folding. The GroEL-GroES system forms a nano-cage that allows encapsulation of the non-native substrate proteins and provides a physical environment optimized to promote and accelerate protein folding. GroES binds to the apical surface of the GroEL ring, thereby capping the opening of the GroEL channel. This Paracoccus denitrificans protein is Co-chaperonin GroES.